Consider the following 377-residue polypeptide: Prostaglandin reductase-3 (377 aa).

At lysine 35 the chain carries N6-acetyllysine. NADP(+)-binding residues include threonine 185, serine 205, lysine 209, tyrosine 224, serine 247, isoleucine 269, and tyrosine 275. A Phosphoserine modification is found at serine 299. NADP(+) contacts are provided by residues 303–305 (FFL) and asparagine 361.

It belongs to the zinc-containing alcohol dehydrogenase family. Quinone oxidoreductase subfamily. As to expression, widely expressed.

It localises to the peroxisome. The catalysed reaction is 13,14-dihydro-15-oxo-prostaglandin E2 + NADP(+) = 15-oxoprostaglandin E2 + NADPH + H(+). The enzyme catalyses 13,14-dihydro-15-oxo-prostaglandin E1 + NADP(+) = 15-oxoprostaglandin E1 + NADPH + H(+). It catalyses the reaction 13,14-dihydro-15-oxo-PGF2alpha + NADP(+) = 15-oxoprostaglandin F2alpha + NADPH + H(+). It carries out the reaction 13,14-dihydro-15-oxo-prostaglandin F1alpha + NADP(+) = 15-oxoprostaglandin F1alpha + NADPH + H(+). In terms of biological role, functions as 15-oxo-prostaglandin 13-reductase and acts on 15-keto-PGE1, 15-keto-PGE2, 15-keto-PGE1-alpha and 15-keto-PGE2-alpha with highest efficiency towards 15-keto-PGE2-alpha. Overexpression represses transcriptional activity of PPARG and inhibits adipocyte differentiation. The protein is Prostaglandin reductase-3 of Mus musculus (Mouse).